We begin with the raw amino-acid sequence, 271 residues long: Short chain dehydrogenase virK (271 aa).

NADP(+) contacts are provided by Leu-13, Asp-59, Asn-87, Tyr-168, Lys-172, Val-201, and Thr-203. Tyr-168 (proton donor) is an active-site residue. The active-site Lowers pKa of active site Tyr is the Lys-172.

Belongs to the short-chain dehydrogenases/reductases (SDR) family.

It participates in secondary metabolite biosynthesis. Its function is as follows. Short chain dehydrogenase; part of the gene cluster that mediates the biosynthesis of virensols and trichoxide, fungal natural products that contain or are derived from a salicylaldehyde core. The pathway begins with the synthesis of the reduced chain in virensol C by the highly reducing polyketide synthase virA via condensation of one acetate and 8 malonate units. VirA has interesting programming rules since the first 2 ketides are fully reduced, the 3 following ketides undergo beta-dehydration, and the last 3 ketides are only reduced to beta-hydroxys to yield the trihydroxy portion. The production of aldehyde virensol C by virA alone is surprising, since virA does not contain a reductase (R) domain that is typically associated with reductive product release in HRPKS. The cupin-domain enzyme virC is involved in enhancing virA product turnover. The short-chain dehydrogenase virB then oxidizes the C-7 alcohol of virensol C to a ketone, yielding virensol D. Virensol D is further transformed to salicylaldehyde 5-deoxyaurocitrin by the short-chain dehydrogenase virD. VirD catalyzes the dehydrogenation of C-3 to form the beta-ketone aldehyde, which is followed by the generation of the nucleophilic C-2 that is required for the intramolecular aldol condensation between C-2 and C-7, itself followed by dehydration and aromatization which leads to salicylaldehyde 5-deoxyaurocitrin. While the dehydrogenation of virensol D is definitely catalyzed by virD, the aldol condensation and dehydration may be uncatalyzed or assisted by virD. The short chain dehydrogenase virG then converts salicylaldehyde 5-deoxyaurocitrin into virensol B which is further hydroxylated by the cytochrome P450 monooxygenase virE to yield the hydroquinone virensol A. VirI then may oxidize virensol A to form the quinone, while virH performs the epoxidation. Finally, the two remaining short-chain dehydrogenases, virK and virL, are probably responsible for reducing the ketones to the corresponding alcohols to furnish the epoxycyclohexanol structure in trichoxide. This is Short chain dehydrogenase virK from Hypocrea virens (strain Gv29-8 / FGSC 10586) (Gliocladium virens).